The sequence spans 505 residues: Glycerol kinase (505 aa).

An ADP-binding site is contributed by T14. The ATP site is built by T14, T15, and S16. Sn-glycerol 3-phosphate is bound at residue T14. An ADP-binding site is contributed by R18. R84, E85, Y136, and D246 together coordinate sn-glycerol 3-phosphate. Positions 84, 85, 136, 246, and 247 each coordinate glycerol. ADP contacts are provided by T268 and G311. 4 residues coordinate ATP: T268, G311, Q315, and G412. ADP is bound by residues G412 and N416.

It belongs to the FGGY kinase family.

It carries out the reaction glycerol + ATP = sn-glycerol 3-phosphate + ADP + H(+). The protein operates within polyol metabolism; glycerol degradation via glycerol kinase pathway; sn-glycerol 3-phosphate from glycerol: step 1/1. Inhibited by fructose 1,6-bisphosphate (FBP). In terms of biological role, key enzyme in the regulation of glycerol uptake and metabolism. Catalyzes the phosphorylation of glycerol to yield sn-glycerol 3-phosphate. The chain is Glycerol kinase from Vibrio cholerae serotype O1 (strain ATCC 39315 / El Tor Inaba N16961).